The chain runs to 209 residues: Small ribosomal subunit protein uS4 (209 aa).

One can recognise an S4 RNA-binding domain in the interval 99–159 (SRLDSVCYRM…EKSKAQLRIK (61 aa)).

Belongs to the universal ribosomal protein uS4 family. As to quaternary structure, part of the 30S ribosomal subunit. Contacts protein S5. The interaction surface between S4 and S5 is involved in control of translational fidelity.

Functionally, one of the primary rRNA binding proteins, it binds directly to 16S rRNA where it nucleates assembly of the body of the 30S subunit. In terms of biological role, with S5 and S12 plays an important role in translational accuracy. This chain is Small ribosomal subunit protein uS4, found in Thiobacillus denitrificans (strain ATCC 25259 / T1).